A 598-amino-acid polypeptide reads, in one-letter code: Vanadium-dependent bromoperoxidase (598 aa).

Positions 361, 363, 365, 368, and 370 each coordinate Ca(2+). The vanadate site is built by K400 and R408. H480 is a catalytic residue. S485, G486, H487, R547, and H553 together coordinate vanadate. H487 is a catalytic residue.

This sequence belongs to the vanadium-dependent haloperoxidase family. In terms of assembly, homododecamer. Requires Ca(2+) as cofactor. Vanadate serves as cofactor.

It catalyses the reaction RH + Br(-) + H2O2 = RBr + 2 H2O.. Catalyzes the halogenation of organic substrates in the presence of hydrogen peroxide. In Corallina pilulifera (Red coralline alga), this protein is Vanadium-dependent bromoperoxidase.